Consider the following 365-residue polypeptide: NADH-quinone oxidoreductase subunit 8 (365 aa).

9 helical membrane passes run 11 to 31 (WMVA…FAFM), 80 to 100 (FLFV…FGLI), 120 to 140 (LGIL…FLSG), 157 to 177 (ASLI…VLLV), 192 to 212 (HGWL…ASMA), 252 to 272 (FITA…MPVL), 273 to 293 (EVPY…FIWI), 310 to 330 (WGFL…VVAL), and 336 to 356 (YLLY…LYTP).

It belongs to the complex I subunit 1 family. As to quaternary structure, NDH-1 is composed of 15 different subunits, Nqo1 to Nqo15. The complex has a L-shaped structure, with the hydrophobic arm (subunits Nqo7, Nqo8 and Nqo10 to Nqo14) embedded in the membrane and the hydrophilic peripheral arm (subunits Nqo1 to Nqo6, Nqo9 and Nqo15) protruding into the bacterial cytoplasm. The hydrophilic domain contains all the redox centers.

The protein localises to the cell inner membrane. It carries out the reaction a quinone + NADH + 5 H(+)(in) = a quinol + NAD(+) + 4 H(+)(out). Its function is as follows. NDH-1 shuttles electrons from NADH, via FMN and iron-sulfur (Fe-S) centers, to quinones in the respiratory chain. The immediate electron acceptor for the enzyme in this species is menaquinone. Couples the redox reaction to proton translocation (for every two electrons transferred, four hydrogen ions are translocated across the cytoplasmic membrane), and thus conserves the redox energy in a proton gradient required for the synthesis of ATP. In Thermus thermophilus (strain ATCC 27634 / DSM 579 / HB8), this protein is NADH-quinone oxidoreductase subunit 8 (nqo8).